We begin with the raw amino-acid sequence, 181 residues long: Translation initiation factor IF-3 (181 aa).

This sequence belongs to the IF-3 family. Monomer.

It is found in the cytoplasm. Its function is as follows. IF-3 binds to the 30S ribosomal subunit and shifts the equilibrium between 70S ribosomes and their 50S and 30S subunits in favor of the free subunits, thus enhancing the availability of 30S subunits on which protein synthesis initiation begins. The protein is Translation initiation factor IF-3 of Azotobacter vinelandii.